We begin with the raw amino-acid sequence, 264 residues long: Small ribosomal subunit protein eS1 (264 aa).

Residues 236-255 (GEGGSGKRGEAGDKSERPEG) are compositionally biased toward basic and acidic residues. The segment at 236–264 (GEGGSGKRGEAGDKSERPEGYEPPVQESV) is disordered.

The protein belongs to the eukaryotic ribosomal protein eS1 family. Component of the small ribosomal subunit. Mature ribosomes consist of a small (40S) and a large (60S) subunit. The 40S subunit contains about 33 different proteins and 1 molecule of RNA (18S). The 60S subunit contains about 49 different proteins and 3 molecules of RNA (28S, 5.8S and 5S).

It localises to the cytoplasm. In Spodoptera frugiperda (Fall armyworm), this protein is Small ribosomal subunit protein eS1.